Reading from the N-terminus, the 468-residue chain is MKHRIQHIHFVGIGGSGMSGIAEVLLNLGYTISGSDLQESAVTRRLAGLGAHVAIGHTAANVAGAGAIVTSTAVAGDNPEVIAARAAGIPVVPRAIMLAELMRLKRGIAVAGTHGKTTTTSLVASVLAAGDLDPTFVIGGRLTSAGANARLGQGEYIVVEADESDASFLNLLPVMAIVTNIDADHMDTYGHDVARLKSAFIEFTQRLPFYGSAVLCADDANVREIMPFVSRPITTYGLSPDAHVRGENVQADGTRMRFTVQRQDRATALPPLAIELNLPGLHNVRNALAAVAVATELGVPDEAIAQALASFKGVGRRFTQTGEFPVPAAHGGGTFTLIDDYGHHPVEMAATLAAARGAWPDRRIVLAFQPHRYTRTRDCFEDFVRVLGGADAVLLTEVYAAGEPPLVAADGRALARALRVAGRIEPVFVEDVADLPQAVLDFVRDGDVVVVMGAGSISKVPGLVGELA.

An ATP-binding site is contributed by 112 to 118 (GTHGKTT).

This sequence belongs to the MurCDEF family.

It localises to the cytoplasm. It catalyses the reaction UDP-N-acetyl-alpha-D-muramate + L-alanine + ATP = UDP-N-acetyl-alpha-D-muramoyl-L-alanine + ADP + phosphate + H(+). It participates in cell wall biogenesis; peptidoglycan biosynthesis. Its function is as follows. Cell wall formation. This is UDP-N-acetylmuramate--L-alanine ligase from Bordetella petrii (strain ATCC BAA-461 / DSM 12804 / CCUG 43448).